An 893-amino-acid chain; its full sequence is Dolichyl-phosphate-mannose--protein mannosyltransferase 1 (893 aa).

The next 7 membrane-spanning stretches (helical) occupy residues 29 to 49, 77 to 97, 124 to 144, 147 to 167, 170 to 190, 224 to 244, and 258 to 278; these read FSFLDYVVVIFLTVVAFCVRA, LLMDVYPPLGKLLFSLVAALT, LFTCLLGSLLVPLMYGTVYFP, SKTAASLAALFVIFDNGLITM, YIMIEIPALYFMSLTAFYWSV, AMFTFGWLLILAAFHLWNLLG, and FSYIFYLIGVPITVYLAVFAV. Residues 310–364 enclose the MIR 1 domain; sequence FADVAYGSLVTIRNAIPEHGYLHSSELLYPEGTEQQIISLVDEPNQNALWIIEHE. A glycan (N-linked (GlcNAc...) asparagine) is linked at Asn-370. 2 consecutive MIR domains span residues 374–433 and 443–499; these read IELL…IQIL and NGTV…IESN. The N-linked (GlcNAc...) asparagine glycan is linked to Asn-443. Position 451 is a phosphothreonine (Thr-451). 3 helical membrane-spanning segments follow: residues 573–593, 610–630, and 643–663; these read FVWYSVISLVAFFVIVQIFCL, YNYNIGKFVVAWLLHWAPYIL, and ALYFGIAALGVSWSFLGNAVF. Asn-665 carries N-linked (GlcNAc...) asparagine glycosylation. A helical membrane pass occupies residues 671-691; sequence ALSVIIMALMFLVYRLYSPFT. Asn-720 carries N-linked (GlcNAc...) asparagine glycosylation. The tract at residues 785-893 is disordered; it reads KAEQEAREAA…VAESAQARVE (109 aa). A compositionally biased stretch (basic and acidic residues) spans 786 to 806; the sequence is AEQEAREAAEKAASEAAERSS. Composition is skewed to low complexity over residues 807–823 and 854–864; these read SEAAASSSSESVAAASV and MEAAALNNAAE. Polar residues predominate over residues 868–878; it reads VVGSSPESVAS.

Belongs to the glycosyltransferase 39 family.

Its subcellular location is the endoplasmic reticulum membrane. It localises to the nucleus membrane. The catalysed reaction is a di-trans,poly-cis-dolichyl beta-D-mannosyl phosphate + L-seryl-[protein] = 3-O-(alpha-D-mannosyl)-L-seryl-[protein] + a di-trans,poly-cis-dolichyl phosphate + H(+). The enzyme catalyses a di-trans,poly-cis-dolichyl beta-D-mannosyl phosphate + L-threonyl-[protein] = 3-O-(alpha-D-mannosyl)-L-threonyl-[protein] + a di-trans,poly-cis-dolichyl phosphate + H(+). The protein operates within protein modification; protein glycosylation. Functionally, transfers mannose from Dol-P-mannose to Ser or Thr residues on proteins. Required for normal cell growth and septum formation. Shown to actively O-mannosylate wsc1. This Schizosaccharomyces pombe (strain 972 / ATCC 24843) (Fission yeast) protein is Dolichyl-phosphate-mannose--protein mannosyltransferase 1 (ogm1).